We begin with the raw amino-acid sequence, 84 residues long: Large ribosomal subunit protein bL27 (84 aa).

The interval 1–22 (MAHKKAGGSTRNGRDSESKRLG) is disordered.

This sequence belongs to the bacterial ribosomal protein bL27 family.

In Shewanella oneidensis (strain ATCC 700550 / JCM 31522 / CIP 106686 / LMG 19005 / NCIMB 14063 / MR-1), this protein is Large ribosomal subunit protein bL27.